The chain runs to 344 residues: Fructose-1,6-bisphosphatase class 1 (344 aa).

Glu-107, Asp-129, Leu-131, and Asp-132 together coordinate Mg(2+). The substrate site is built by Asn-224, Tyr-252, and Lys-282. Glu-288 contributes to the Mg(2+) binding site.

Belongs to the FBPase class 1 family. Homotetramer. It depends on Mg(2+) as a cofactor.

Its subcellular location is the cytoplasm. The catalysed reaction is beta-D-fructose 1,6-bisphosphate + H2O = beta-D-fructose 6-phosphate + phosphate. It participates in carbohydrate biosynthesis; Calvin cycle. This chain is Fructose-1,6-bisphosphatase class 1, found in Synechococcus sp. (strain ATCC 27144 / PCC 6301 / SAUG 1402/1) (Anacystis nidulans).